A 441-amino-acid polypeptide reads, in one-letter code: MAIHKALVMCLGLPLFLFPGAWAQGHVPPGCSQGLNPLYYNLCDRSGAWGIVLEAVAGAGIVTTFVLTIILVASLPFVQDTKKRSLLGTQVFFLLGTLGLFCLVFACVVKPDFSTCASRRFLFGVLFAICFSCLAAHVFALNFLARKNHGPRGWVIFTVALLLTLVEVIINTEWLIITLVRGSGEGGPQGNSSAGWAVASPCAIANMDFVMALIYVMLLLLGAFLGAWPALCGRYKRWRKHGVFVLLTTATSVAIWVVWIVMYTYGNKQHNSPTWDDPTLAIALAANAWAFVLFYVIPEVSQVTKSSPEQSYQGDMYPTRGVGYETILKEQKGQSMFVENKAFSMDEPVAAKRPVSPYSGYNGQLLTSVYQPTEMALMHKVPSEGAYDIILPRATANSQVMGSANSTLRAEDMYSAQSHQAATPPKDGKNSQVFRNPYVWD.

A signal peptide spans 1 to 23 (MAIHKALVMCLGLPLFLFPGAWA). Residues 24–50 (QGHVPPGCSQGLNPLYYNLCDRSGAWG) lie on the Extracellular side of the membrane. Residues 51–71 (IVLEAVAGAGIVTTFVLTIIL) form a helical membrane-spanning segment. Topologically, residues 72-85 (VASLPFVQDTKKRS) are cytoplasmic. The chain crosses the membrane as a helical span at residues 86–106 (LLGTQVFFLLGTLGLFCLVFA). Over 107–120 (CVVKPDFSTCASRR) the chain is Extracellular. A helical membrane pass occupies residues 121-141 (FLFGVLFAICFSCLAAHVFAL). Over 142 to 155 (NFLARKNHGPRGWV) the chain is Cytoplasmic. The helical transmembrane segment at 156 to 176 (IFTVALLLTLVEVIINTEWLI) threads the bilayer. Residues 177-208 (ITLVRGSGEGGPQGNSSAGWAVASPCAIANMD) lie on the Extracellular side of the membrane. Asn191 carries an N-linked (GlcNAc...) asparagine glycan. The helical transmembrane segment at 209 to 229 (FVMALIYVMLLLLGAFLGAWP) threads the bilayer. The Cytoplasmic segment spans residues 230–241 (ALCGRYKRWRKH). Residues 242-262 (GVFVLLTTATSVAIWVVWIVM) traverse the membrane as a helical segment. At 263–279 (YTYGNKQHNSPTWDDPT) the chain is on the extracellular side. A helical transmembrane segment spans residues 280–300 (LAIALAANAWAFVLFYVIPEV). The Cytoplasmic segment spans residues 301-441 (SQVTKSSPEQ…QVFRNPYVWD (141 aa)). Phosphoserine is present on residues Ser344, Ser383, Ser403, and Ser406. The segment at 412–441 (DMYSAQSHQAATPPKDGKNSQVFRNPYVWD) is disordered. Tyr414 is subject to Phosphotyrosine. Thr423 is subject to Phosphothreonine.

It belongs to the G-protein coupled receptor 3 family. In terms of tissue distribution, expression is highest in the periphery, particularly in the stomach, but also in the kidney, liver, pancreas, and prostate. In brain, levels of expression are generally lower than in the periphery, with the exception of cerebellum, spinal cord, and dorsal root ganglia (DRG).

It localises to the cell membrane. It is found in the cytoplasmic vesicle membrane. Its function is as follows. This retinoic acid-inducible G-protein coupled receptor provide evidence for a possible interaction between retinoid and G-protein signaling pathways. The chain is G-protein coupled receptor family C group 5 member C (GPRC5C) from Homo sapiens (Human).